Reading from the N-terminus, the 237-residue chain is NAD-dependent protein deacetylase (237 aa).

Residues 1–237 (MLTTWLTEAK…LEETNRALQA (237 aa)) enclose the Deacetylase sirtuin-type domain. 7 residues coordinate NAD(+): Ala-18, Thr-22, Phe-29, Arg-30, Gln-95, Asp-98, and His-113. Nicotinamide is bound at residue Phe-29. Asp-98 serves as a coordination point for nicotinamide. Catalysis depends on His-113, which acts as the Proton acceptor. Zn(2+) contacts are provided by Cys-121, Cys-124, Cys-140, and Cys-142. NAD(+) contacts are provided by Ser-180, Ser-181, Asn-205, and Ile-224.

It belongs to the sirtuin family. Class U subfamily. It depends on Zn(2+) as a cofactor.

The protein resides in the cytoplasm. The catalysed reaction is N(6)-acetyl-L-lysyl-[protein] + NAD(+) + H2O = 2''-O-acetyl-ADP-D-ribose + nicotinamide + L-lysyl-[protein]. Its function is as follows. NAD-dependent protein deacetylase which modulates the activities of several enzymes which are inactive in their acetylated form. This chain is NAD-dependent protein deacetylase, found in Halalkalibacterium halodurans (strain ATCC BAA-125 / DSM 18197 / FERM 7344 / JCM 9153 / C-125) (Bacillus halodurans).